Reading from the N-terminus, the 531-residue chain is Cytochrome P450 monooxygenase peniB (531 aa).

Residues 30 to 48 (ILSIAAVVFLGYLLLRPLF) traverse the membrane as a helical segment. Heme is bound at residue cysteine 445.

It belongs to the cytochrome P450 family. It depends on heme as a cofactor.

It is found in the membrane. The enzyme catalyses silphinene-15-oate + 2 reduced [NADPH--hemoprotein reductase] + 2 O2 = gamma-lactone-2-keto[5.5.5.5]fenestrane + 2 oxidized [NADPH--hemoprotein reductase] + 3 H2O + H(+). The protein operates within secondary metabolite biosynthesis; terpenoid biosynthesis. Its function is as follows. Cytochrome P450 monooxygenase; part of the gene cluster that mediates the biosynthesis of penifulvin A, a potent insecticidal sesquiterpene that features a [5.5.5.6]dioxafenestrane ring. Within the pathway, peniB catalyzes the multi-step oxidation of silphinene to synthesize gamma-lactone-2-keto[5.5.5.5]fenestrane, including oxidation of the C15 methylgroup in silphinene to form silphinene-15-oic acid, activationof the C1-C2 double bond to form the gamma-lactone-2-hydroxy[5.5.5.5]fenestrane, and dehydrogenation of the hydroxy group at C2 of gamma-lactone-2-hydroxy[5.5.5.5]fenestrane to generate gamma-lactone-2-keto[5.5.5.5]fenestrane. The first step of the pathway is performed by the sesquiterpene cyclase peniA that generates the angular triquinane scaffold silphinene via cyclization of the linear farnesyl pyrophosphate (FPP). The cytochrome P450 monooxygenase peniB and the flavin-dependent monooxygenase peniC then catalyze a series of oxidation reactions to transform silphinene into penifulvin A. The chain is Cytochrome P450 monooxygenase peniB from Penicillium patulum (Penicillium griseofulvum).